A 437-amino-acid polypeptide reads, in one-letter code: Ribosomal protein uS12 methylthiotransferase RimO (437 aa).

The 112-residue stretch at 5–116 (PTISVSHLGC…IAEVIQRVET (112 aa)) folds into the MTTase N-terminal domain. [4Fe-4S] cluster contacts are provided by cysteine 14, cysteine 50, cysteine 79, cysteine 154, cysteine 158, and cysteine 161. One can recognise a Radical SAM core domain in the interval 140–369 (TTNEAVAYLR…MEIQQPIAAK (230 aa)). Positions 372 to 437 (QKCVGQTVEV…DVYDLYGKVI (66 aa)) constitute a TRAM domain.

This sequence belongs to the methylthiotransferase family. RimO subfamily. [4Fe-4S] cluster serves as cofactor.

The protein localises to the cytoplasm. It carries out the reaction L-aspartate(89)-[ribosomal protein uS12]-hydrogen + (sulfur carrier)-SH + AH2 + 2 S-adenosyl-L-methionine = 3-methylsulfanyl-L-aspartate(89)-[ribosomal protein uS12]-hydrogen + (sulfur carrier)-H + 5'-deoxyadenosine + L-methionine + A + S-adenosyl-L-homocysteine + 2 H(+). Its function is as follows. Catalyzes the methylthiolation of an aspartic acid residue of ribosomal protein uS12. The polypeptide is Ribosomal protein uS12 methylthiotransferase RimO (Crocosphaera subtropica (strain ATCC 51142 / BH68) (Cyanothece sp. (strain ATCC 51142))).